Here is a 335-residue protein sequence, read N- to C-terminus: 2-acylglycerol O-acyltransferase 1 (335 aa).

2 helical membrane passes run 24–44 (WVFSFLLLAQCCIGIFICLVL) and 47–67 (VWLLLALYVLWLYLDWETPQA). N-linked (GlcNAc...) asparagine glycans are attached at residues asparagine 125 and asparagine 180.

Belongs to the diacylglycerol acyltransferase family.

Its subcellular location is the endoplasmic reticulum membrane. The catalysed reaction is a 2-acylglycerol + an acyl-CoA = a 1,2-diacylglycerol + CoA. The enzyme catalyses a 2-acylglycerol + an acyl-CoA = a 1,2-diacyl-sn-glycerol + CoA. It carries out the reaction a 2-acylglycerol + an acyl-CoA = a 2,3-diacyl-sn-glycerol + CoA. It catalyses the reaction a 1-acylglycerol + an acyl-CoA = a 1,2-diacylglycerol + CoA. The catalysed reaction is a 1-acylglycerol + an acyl-CoA = a 1,3-diacylglycerol + CoA. The enzyme catalyses a 1-acyl-sn-glycerol + an acyl-CoA = a 1,3-diacyl-sn-glycerol + CoA. It carries out the reaction a 3-acyl-sn-glycerol + an acyl-CoA = a 1,3-diacyl-sn-glycerol + CoA. It functions in the pathway glycerolipid metabolism; triacylglycerol biosynthesis. Functionally, involved in glycerolipid synthesis and lipid metabolism. Catalyzes the formation of diacylglycerol, the precursor of triacylglycerol, by transferring the acyl chain of a fatty acyl-CoA to a monoacylglycerol, mainly at the sn-1 or sn-3 positions. It uses both sn-2-monoacylglycerol (2-acylglycerol) and sn-1-monoacylglycerol (1-acyl-sn-glycerol) equally well as substrates, and uses sn-3-monoacylglycerol (3-acyl-sn-glycerol) with lower efficiency. In Xenopus laevis (African clawed frog), this protein is 2-acylglycerol O-acyltransferase 1 (mogat1).